A 512-amino-acid polypeptide reads, in one-letter code: Cytochrome P450 26B1 (512 aa).

Position 441 (C441) interacts with heme.

Belongs to the cytochrome P450 family. Heme serves as cofactor.

It is found in the endoplasmic reticulum membrane. The protein resides in the microsome membrane. The catalysed reaction is all-trans-retinoate + reduced [NADPH--hemoprotein reductase] + O2 = all-trans-4-hydroxyretinoate + oxidized [NADPH--hemoprotein reductase] + H2O + H(+). It carries out the reaction all-trans-retinoate + reduced [NADPH--hemoprotein reductase] + O2 = all-trans-18-hydroxyretinoate + oxidized [NADPH--hemoprotein reductase] + H2O + H(+). Functionally, a cytochrome P450 monooxygenase involved in the metabolism of retinoates (RAs), the active metabolites of vitamin A, and critical signaling molecules in animals. RAs exist as at least four different isomers: all-trans-RA (atRA), 9-cis-RA, 13-cis-RA, and 9,13-dicis-RA, where atRA is considered to be the biologically active isomer, although 9-cis-RA and 13-cis-RA also have activity. Catalyzes the hydroxylation of atRA primarily at C-4 and C-18, thereby contributing to the regulation of atRA homeostasis and signaling. Hydroxylation of atRA limits its biological activity and initiates a degradative process leading to its eventual elimination. Involved in the convertion of atRA to all-trans-4-oxo-RA. Can oxidize all-trans-13,14-dihydroretinoate (DRA) to metabolites which could include all-trans-4-oxo-DRA, all-trans-4-hydroxy-DRA, all-trans-5,8-epoxy-DRA, and all-trans-18-hydroxy-DRA. Shows preference for the following substrates: atRA &gt; 9-cis-RA &gt; 13-cis-RA. Plays a central role in germ cell development: acts by degrading RAs in the developing testis, preventing STRA8 expression, thereby leading to delay of meiosis. Required for the maintenance of the undifferentiated state of male germ cells during embryonic development in Sertoli cells, inducing arrest in G0 phase of the cell cycle and preventing meiotic entry. Plays a role in skeletal development, both at the level of patterning and in the ossification of bone and the establishment of some synovial joints. Essential for postnatal survival. Its function is as follows. Also has a significant activity in oxidation of tazarotenic acid and may therefore metabolize that xenobiotic in vivo. The sequence is that of Cytochrome P450 26B1 (Cyp26b1) from Mus musculus (Mouse).